A 374-amino-acid polypeptide reads, in one-letter code: Carbamoyl phosphate synthase small chain (374 aa).

The segment at M1–Q183 is CPSase. L-glutamine contacts are provided by S41, G235, and G237. The region spanning H187–P374 is the Glutamine amidotransferase type-1 domain. The active-site Nucleophile is C264. L-glutamine contacts are provided by L265, Q268, N306, G308, and F309. Catalysis depends on residues H348 and E350.

The protein belongs to the CarA family. In terms of assembly, composed of two chains; the small (or glutamine) chain promotes the hydrolysis of glutamine to ammonia, which is used by the large (or ammonia) chain to synthesize carbamoyl phosphate. Tetramer of heterodimers (alpha,beta)4.

It catalyses the reaction hydrogencarbonate + L-glutamine + 2 ATP + H2O = carbamoyl phosphate + L-glutamate + 2 ADP + phosphate + 2 H(+). The enzyme catalyses L-glutamine + H2O = L-glutamate + NH4(+). It functions in the pathway amino-acid biosynthesis; L-arginine biosynthesis; carbamoyl phosphate from bicarbonate: step 1/1. Its pathway is pyrimidine metabolism; UMP biosynthesis via de novo pathway; (S)-dihydroorotate from bicarbonate: step 1/3. Functionally, small subunit of the glutamine-dependent carbamoyl phosphate synthetase (CPSase). CPSase catalyzes the formation of carbamoyl phosphate from the ammonia moiety of glutamine, carbonate, and phosphate donated by ATP, constituting the first step of 2 biosynthetic pathways, one leading to arginine and/or urea and the other to pyrimidine nucleotides. The small subunit (glutamine amidotransferase) binds and cleaves glutamine to supply the large subunit with the substrate ammonia. This chain is Carbamoyl phosphate synthase small chain, found in Zymomonas mobilis subsp. mobilis (strain ATCC 31821 / ZM4 / CP4).